We begin with the raw amino-acid sequence, 148 residues long: Leghemoglobin 2 (148 aa).

Residues 2–148 enclose the Globin domain; sequence GFTEKQEALV…LSAAIKKAMS (147 aa). Tyr30 carries the post-translational modification Nitrated tyrosine. Ser45 provides a ligand contact to heme b. Ser45 is modified (phosphoserine). His63 contacts O2. Residues Lys66, His95, and Lys98 each coordinate heme b. Tyr136 is modified (nitrated tyrosine).

It belongs to the plant globin family. As to quaternary structure, monomer. Nitrated in effective nodules and particularly in hypoxic conditions; this mechanism may play a protective role in the symbiosis by buffering toxic peroxynitrite NO(2)(-). Nitration level decrease during nodule senescence. Post-translationally, phosphorylation at Ser-45 disrupts the molecular environment of its porphyrin ring oxygen binding pocket, thus leading to a reduced oxygen consumption and to the delivery of oxygen O(2) to symbiosomes. Stem nodules.

It is found in the cytoplasm. The protein resides in the cytosol. The protein localises to the nucleus. Functionally, leghemoglobin that reversibly binds oxygen O(2) through a pentacoordinated heme iron. In stem nodules, facilitates the diffusion of oxygen to the bacteroids while preventing the bacterial nitrogenase from being inactivated by buffering dioxygen, nitric oxide and carbon monoxide, and promoting the formation of reactive oxygen species (ROS, e.g. H(2)O(2)). This role is essential for symbiotic nitrogen fixation (SNF). The polypeptide is Leghemoglobin 2 (Sesbania rostrata).